Here is a 241-residue protein sequence, read N- to C-terminus: Fatty acid metabolism regulator protein (241 aa).

An HTH gntR-type domain is found at 11 to 79; that stretch reads QSPAALAEEY…HGKPTKVNNI (69 aa). Residues 39-58 constitute a DNA-binding region (H-T-H motif); it reads ERDLADKIGVTRTTLREVLQ.

In terms of assembly, homodimer.

It is found in the cytoplasm. Functionally, multifunctional regulator of fatty acid metabolism. The chain is Fatty acid metabolism regulator protein from Haemophilus influenzae (strain ATCC 51907 / DSM 11121 / KW20 / Rd).